The primary structure comprises 119 residues: MTKSELIAALAARYPQLAARDTDYAVKTMLDAMTQALASGQRIEIRGFGSFSLSQRSPRVGRNPKSGEQVLVPGKQVPHFKAGKELRERVDLAGGLADTQPDGDAPDQPQPTLLGLHAM.

Positions 93–119 are disordered; it reads AGGLADTQPDGDAPDQPQPTLLGLHAM. The span at 97 to 112 shows a compositional bias: low complexity; sequence ADTQPDGDAPDQPQPT.

It belongs to the bacterial histone-like protein family. Heterodimer of an alpha and a beta chain.

This protein is one of the two subunits of integration host factor, a specific DNA-binding protein that functions in genetic recombination as well as in transcriptional and translational control. In Bordetella petrii (strain ATCC BAA-461 / DSM 12804 / CCUG 43448), this protein is Integration host factor subunit beta.